A 121-amino-acid polypeptide reads, in one-letter code: Probable intron-encoded DNA endonuclease aI1 (121 aa).

It belongs to the LAGLIDADG endonuclease family.

It is found in the mitochondrion. Mitochondrial DNA endonuclease involved in intron homing. This Mycosarcoma maydis (Corn smut fungus) protein is Probable intron-encoded DNA endonuclease aI1 (aI1).